Consider the following 3082-residue polypeptide: MKKLSVTSKRQYNLYASPISRRLSLLMKLSLETVTVMFLLGASPVLASNLALTGAKNLSQNSPGVNYSKGSHGSIVLSGDDDFCGADYVLGRGGNSTVRNGIPISVEEEYERFVKQKLMNNATSPYSQSSEQQVWTGDGLTSKGSGYMGGKSTDGDKNILPEAYGIYSFATGCGSSAQGNYSVAFGANATALTGGSQAFGVAALASGRVSVAIGVGSEATGEAGVSLGGLSKAAGARSVAIGTRAKAQGEESIAIGSSVKNGDKDGSAVAQGAKAIAIGSNSISFQHYAVAVGAKAHALLSKTVALGYDSVADVDAGIRGYDPVEDEPSKDVSFVWKSSLGAVSVGNRKEGLTRQIIGVAAGTEDTDAVNVAQLKALRGMISEKGGWNLTVNNDNNTVVSSGGALDLSSGSKNLKIVKDGKKNNVTFDVARDLTLKSIKLDGVTLNETGLFIANGPQITASGINAGSQKITGVAEGTDANDAVNFGQLKKIETEVKEQVAASGFVKQDSDTKYLTIGKDTDGDTINIANNKSDKRTLTGIKEGDISKDSSEAITGSQLFTTNQNVKTVSDNLQTAATNIAKTFGGGAKYEDGEWIAPAFKVKTVTGEGKEEEKRYQNVADALAGVGSSITNVQNKVTEQVNNAITKVEGDALLWSDEANAFVARHEKSKLGKGASKATQENSKITYLLDGDVSKDSTDAITGKQLYSLGDKIASYLGGNAKYEDGEWTAPTFKVKTVKEDGKEEEKTYQNVAEALTGVGTSFTNVKNEITKQINHLQSDDSAVVHYDKNKDETGGINYASVTLGKGKDSAAVTLHNVADGSISKDSRDAINGSQIYSLNEQLATYFGGGAKYENGQWTAPIFKVKTVKEDGEEEEKTYQNVAEALTGVGTSFTNIKSEITKQIANEISSVTGDSLVKKDLATNLITIGKEVAGTEINIASVSKADRTLSGVKEAVKDNEAVNKGQLDKGLKHLSDSLQSDDSAVVHYDKKTDETGGINYTSVTLGGKDKTPVALHNVADGSISKDSHDAINGGQIHTIGEDVAKFLGGAASFNNGAFTGPTYKLSNIDAKGDVQQSEFKDIGSAFAGLDTNIKNVNNNVTNKFNELTQNITNVTQQVKGDALLWSDEANAFVARHEKSKLGKGASKATQENSKITYLLDGDVSKDSTDAITGKQLYSLGDKIASYLGGNAKYENGEWTAPTFKVKTVKEDGKEEEKTYQNVAEALTGVGASFTNVKNEITKQINHLQSDDSAVVHYDKNKDETGGINYASVTLGKGKDSAAVTLHNVADGSISKDSRDAINGSQIYSLNEQLATYFGGGAKYENGQWTAPIFKVKTVKEDGEEEEKTYQNVAEALTGVGTSFTNIKSEITKQIANEISSVTGDSLVKKDLATNLITIGKEVAGTEINIASVSKADRTLSGVKEAVKDNEAVNKGQLDTNIKKVEDKLTEAVGKVTQQVKGDALLWSNEDNAFVADHGKDSAKTKSKITHLLDGNIASGSTDAVTGGQLYSLNEQLATYFGGGAKYENGQWTAPTFKVKTVNGEGKEEEQTYQNVAEALTGVGASFMNVQNKITNEITNQVNNAITKVEGDSLVKQDNLGIITLGKERGGLKVDFANRDGLDRTLSGVKEAVNDNEAVNKGQLDADISKVNNNVTNKFNELTQNITNVTQQVKGDALLWSDEANAFVARHEKSKLEKGVSKATQENSKITYLLDGDISKGSTDAVTGGQLYSLNEQLATYFGGGAKYENGQWTAPTFKVKTVNGEGKEEEQTYQNVAAAFEGVGTSFTNIKSEITKQINNEIINVKGDSLVKRDLATNLITIGKEIEGSVINIANKSGEARTISGVKEAVKDNEAVNKGQLDTNIKKVEDKLTEAVGKVTQQVKGDALLWSNEDNAFVADHGKDSAKTKSKITHLLDGNIASGSTDAVTGGQLYSLNEQLATYFGGGAKYENGQWTAPTFKVKTVNGEGKEEEKTYQNVAAAFEGVGTSFTNIKSEITKQIANEISNVTGDSLVKKDLDTNLITIGKEIAGTEINIASVSKADRTLSGVKEAVNDNEAVNKGQLDANISKVNNNVTNKFNELTQSITNVTQQVKGDALLWSDEANAFVARHEKSKLEKGVSKATQENSKITYLLDGDISKGSTDAVTGGQLYSLNEQLATYFGGGAKYENGQWTAPTFKVKTVNGEGKEEEQTYQNVAAAFEGVGTSFTNIKSEITKQINNEIINVKGDSLVKRDLATNLITIGKEIEGSVINIANKSGEARTISGVKEAVKDNEAVNKGQLDTNIKKVEDKLTEAVGKVTQQVKGDALLWSNEDNAFVADHGKDSAKTKSKITHLLDGNIASGSTDAVTGGQLYSLNEQLATYFGGGAKYENGQWTAPTFKVKTVNGEGKEEEKTYQNVAAAFEGVGTSFTHVKNEITKQINHLQSDDSAVVHYDKDDKNGSINYASVTLGKGKDSAAVALHNVADGSISKDSHDAINGGQIHTIGEDVAKFLGGDAAFKDGAFTGPTYKLSNIDAKGDVQQSEFKDIGSAFAGLDTNIKNVNNNVTNKLSELTQNITTVTQQVKGNALLWSDEANAFVARHEKSKLEKGASKAIQENSKITYLLDGDVSKGSTDAVTGGQLYSMSNMLATYLGGNAKYENGEWTAPTFKVKTVNGEGKEEEQTYQNVAEALTGVGTSFTNIKSEIAKQINHLQSDDSAVIHYDKNKDETGTINYASVTLGKGEDSAAVALHNVAAGNIAKDSRDAINGSQLYSLNEQLLTYFGGDAGYKDGQWIAPKFHVLQFKSDGSSGEKESYDNVAAAFEGVNKSLAGMNERINNVTAGQNVSSSSLNWNETEGGYDARHNGVDSKLTHVENGDVSEKSKEAVNGSQLWNTNEKVEAVEKDVKNIEKKVQDIATVADSAVKYEKDSTGKKTNVIKLVGGSESEPVLIDNVADGKIEADSKQAVNGGQLRDYTEKQMKIVLDDAKKYTDERFNDVVNNGINEAKAYTDVKFEALSYTVEEVRKEARQAAAIGLAVSNLRYYDIPGSLSLSFGTGIWRSQSAFAIGAGYTSEDGNIRSNLSITSSGGQWGVGAGITLRLK.

A signal peptide spans 1–47 (MKKLSVTSKRQYNLYASPISRRLSLLMKLSLETVTVMFLLGASPVLA). The segment at 48–376 (SNLALTGAKN…DAVNVAQLKA (329 aa)) is binds to host cells. Positions 48-2901 (SNLALTGAKN…KVQDIATVAD (2854 aa)) are surface exposed passenger domain. The segment at 53-2850 (TGAKNLSQNS…DARHNGVDSK (2798 aa)) is does not bind host cells, no host proangiogenic cytokine induction, collagen or fibronectin, no autoagglutination. The interval 470-2850 (ITGVAEGTDA…DARHNGVDSK (2381 aa)) is required to bind fibronectin, not required for surface expression on bacteria, bacterial autoagglutination, host cell binding, collagen binding or host proangiogenic cytokine induction. Residues 2902-3027 (SAVKYEKDST…VSNLRYYDIP (126 aa)) are outer membrane translocation of the passenger domain. 4 consecutive transmembrane segments (beta stranded) span residues 3028 to 3039 (GSLSLSFGTGIW), 3044 to 3051 (AFAIGAGY), 3055 to 3065 (DGNIRSNLSIT), and 3070 to 3082 (QWGV…LRLK). The tract at residues 3028-3082 (GSLSLSFGTGIWRSQSAFAIGAGYTSEDGNIRSNLSITSSGGQWGVGAGITLRLK) is translocator domain.

Belongs to the autotransporter-2 (AT-2) (TC 1.B.40) family. Homotrimer. Crystals of the head region form trimers.

The protein localises to the cell surface. It localises to the cell outer membrane. In terms of biological role, mediates bacterial adherence to host endothelial cells and host extracellular matrix proteins (collagen type I, III, IV, laminin and fibronectin). Static versus dynamic adherence results differ slightly; in dynamic adherence studies bacteria bind to fixed components under a constant defined flow rate to simulate in vivo infection conditions. Induces secretion of host proangiogenic cytokines such as VEGFA, ADM, IGFBP-3 and IL-8. May prevent bacterial phagocytosis by macrophages. Probably mediates bacterial autoagglutination. Negatively impacts type IV secretion system effectors (VirB/D4 T4SS and its substrate Bep proteins), possibly by preventing close association of host and bacterial cells. This implies the 2 factors are expressed at different times during infection. The polypeptide is Autotransporter adhesin BadA (Bartonella henselae (Rochalimaea henselae)).